The chain runs to 165 residues: Large ribosomal subunit protein uL10 (165 aa).

It belongs to the universal ribosomal protein uL10 family. Part of the ribosomal stalk of the 50S ribosomal subunit. The N-terminus interacts with L11 and the large rRNA to form the base of the stalk. The C-terminus forms an elongated spine to which L12 dimers bind in a sequential fashion forming a multimeric L10(L12)X complex.

Its function is as follows. Forms part of the ribosomal stalk, playing a central role in the interaction of the ribosome with GTP-bound translation factors. This chain is Large ribosomal subunit protein uL10, found in Enterobacter sp. (strain 638).